An 806-amino-acid polypeptide reads, in one-letter code: Phosphatidylinositol 4-kinase beta (806 aa).

Positions 55–247 constitute a PIK helical domain; the sequence is LDKVKLIRGS…GTKLRKLILS (193 aa). Disordered regions lie at residues 69–104 and 253–310; these read LDKI…SASR and AHKK…DEPV. Positions 283–302 are enriched in polar residues; that stretch reads DATVSISLSSNLKRTSSNPK. The 267-residue stretch at 525-791 folds into the PI3K/PI4K catalytic domain; the sequence is EPWQEKVRRI…MVDGSMRSIT (267 aa). The segment at 531 to 537 is G-loop; it reads VRRIREG. The catalytic loop stretch occupies residues 658–666; the sequence is QVKDRHNGN. The interval 677-701 is activation loop; sequence HIDFGFILSSSPRNLGFETSAFKLT.

It belongs to the PI3/PI4-kinase family. Type III PI4K subfamily. Requires Mg(2+) as cofactor. The cofactor is Mn(2+).

It localises to the endomembrane system. The protein resides in the mitochondrion outer membrane. The protein localises to the rough endoplasmic reticulum membrane. The catalysed reaction is a 1,2-diacyl-sn-glycero-3-phospho-(1D-myo-inositol) + ATP = a 1,2-diacyl-sn-glycero-3-phospho-(1D-myo-inositol 4-phosphate) + ADP + H(+). Functionally, phosphorylates phosphatidylinositol (PI) in the first committed step in the production of the second messenger inositol-1,4,5,-trisphosphate (PIP). May play an important role in the inner ear development. This is Phosphatidylinositol 4-kinase beta (pi4kb) from Xenopus tropicalis (Western clawed frog).